A 300-amino-acid chain; its full sequence is Tyrosine recombinase XerC (300 aa).

The 87-residue stretch at Thr2–Leu88 folds into the Core-binding (CB) domain. The 186-residue stretch at Arg109–Met294 folds into the Tyr recombinase domain. Catalysis depends on residues Arg150, Lys174, His246, Arg249, and His272. Tyr281 serves as the catalytic O-(3'-phospho-DNA)-tyrosine intermediate.

The protein belongs to the 'phage' integrase family. XerC subfamily. Forms a cyclic heterotetrameric complex composed of two molecules of XerC and two molecules of XerD.

It localises to the cytoplasm. In terms of biological role, site-specific tyrosine recombinase, which acts by catalyzing the cutting and rejoining of the recombining DNA molecules. The XerC-XerD complex is essential to convert dimers of the bacterial chromosome into monomers to permit their segregation at cell division. It also contributes to the segregational stability of plasmids. The protein is Tyrosine recombinase XerC of Listeria monocytogenes serotype 4a (strain HCC23).